The chain runs to 349 residues: MDPGRVVFDSGVARRACPGGAQMLLFGGGGSANSGGFFRGVPAAVLGMDESRSSSSAAGAGAKRPFFTTHEELLEEEYYDEQAPEKKRRLTAEQVQMLERSFEEENKLEPERKTELARRLGMAPRQVAVWFQNRRARWKTKQLEHDFDRLKAAYDALAADHHALLSDNDRLRAQVISLTEKLQDKETSPSSATITTAAQEVDQPDEHTEAASTTGFATVDGALAAPPPGHQQPPHKDDLVSSGGTNDDGDGGAAVVVFDVTEGANDRLSCESAYFADAAEAYERDCAGHYALSSEEEDGGAVSDEGCSFDLPDAAAAAAAMFGAAGVVHHDAADDEEAQLGSWTAWFWS.

Positions 83-142 form a DNA-binding region, homeobox; that stretch reads APEKKRRLTAEQVQMLERSFEEENKLEPERKTELARRLGMAPRQVAVWFQNRRARWKTKQ. The interval 141 to 185 is leucine-zipper; that stretch reads KQLEHDFDRLKAAYDALAADHHALLSDNDRLRAQVISLTEKLQDK. The disordered stretch occupies residues 181–253; the sequence is KLQDKETSPS…GTNDDGDGGA (73 aa). Low complexity predominate over residues 188 to 198; sequence SPSSATITTAA.

This sequence belongs to the HD-ZIP homeobox family. Class I subfamily. As to quaternary structure, homodimer. May form a heterodimer with HOX4. Expressed in seedlings, roots, leaves, nodes, internodes, flowers and embryo.

It localises to the nucleus. Its function is as follows. Probable transcription activator that binds to the DNA sequence 5'-CAAT[AT]ATTG-3'. This chain is Homeobox-leucine zipper protein HOX5 (HOX5), found in Oryza sativa subsp. japonica (Rice).